The following is a 281-amino-acid chain: Diaminopimelate epimerase (281 aa).

Asparagine 11 and asparagine 65 together coordinate substrate. Cysteine 74 acts as the Proton donor in catalysis. Substrate is bound by residues 75-76, asparagine 164, asparagine 197, and 215-216; these read GN and ER. Residue cysteine 224 is the Proton acceptor of the active site. 225 to 226 contributes to the substrate binding site; it reads GT.

Belongs to the diaminopimelate epimerase family. As to quaternary structure, homodimer.

It is found in the cytoplasm. It catalyses the reaction (2S,6S)-2,6-diaminopimelate = meso-2,6-diaminopimelate. The protein operates within amino-acid biosynthesis; L-lysine biosynthesis via DAP pathway; DL-2,6-diaminopimelate from LL-2,6-diaminopimelate: step 1/1. Its function is as follows. Catalyzes the stereoinversion of LL-2,6-diaminopimelate (L,L-DAP) to meso-diaminopimelate (meso-DAP), a precursor of L-lysine and an essential component of the bacterial peptidoglycan. This chain is Diaminopimelate epimerase, found in Heliobacterium modesticaldum (strain ATCC 51547 / Ice1).